The chain runs to 225 residues: Acidic leucine-rich nuclear phosphoprotein 32-related protein 2 (225 aa).

LRR repeat units follow at residues 39 to 60 (KLELLSMVKCGLTTLKGMPVLP), 61 to 82 (ALNYLDLSDNELGDDASFDVLI), and 87 to 107 (EIKKITLSGNRLTLDNVRTLK). Positions 121–161 (SSLGLLDDYRVKMFEMIPSLKILDGCDVDGEEVEEEFAAGE) constitute an LRRCT domain. Acidic residues predominate over residues 155 to 175 (EEFAAGEGAEDSDEGDSDEDG). Residues 155 to 225 (EEFAAGEGAE…DEPEAKKSAE (71 aa)) form a disordered region.

This sequence belongs to the ANP32 family.

This Caenorhabditis elegans protein is Acidic leucine-rich nuclear phosphoprotein 32-related protein 2.